The chain runs to 102 residues: Small ribosomal subunit protein eS24 (102 aa).

It belongs to the eukaryotic ribosomal protein eS24 family.

This is Small ribosomal subunit protein eS24 from Halorubrum lacusprofundi (strain ATCC 49239 / DSM 5036 / JCM 8891 / ACAM 34).